An 88-amino-acid chain; its full sequence is Sec-independent protein translocase protein TatA (88 aa).

The chain crosses the membrane as a helical span at residues 1–21 (MGGIGIWQLAIITVIVILLFG). The segment at 46–88 (DNDKDSTQVDDKDSTQVDDNAKQPSNKKVEENIKEQSKEKDRA) is disordered.

Belongs to the TatA/E family. In terms of assembly, the Tat system comprises two distinct complexes: a TatABC complex, containing multiple copies of TatA, TatB and TatC subunits, and a separate TatA complex, containing only TatA subunits. Substrates initially bind to the TatABC complex, which probably triggers association of the separate TatA complex to form the active translocon.

It localises to the cell inner membrane. Part of the twin-arginine translocation (Tat) system that transports large folded proteins containing a characteristic twin-arginine motif in their signal peptide across membranes. TatA could form the protein-conducting channel of the Tat system. The protein is Sec-independent protein translocase protein TatA of Psychromonas ingrahamii (strain DSM 17664 / CCUG 51855 / 37).